The chain runs to 550 residues: Spermatogenesis-associated protein 2 (550 aa).

Positions threonine 83–alanine 156 constitute a PUB domain. Residues tyrosine 320–glycine 337 carry the PIM motif motif. The disordered stretch occupies residues serine 457–glycine 480.

This sequence belongs to the SPATA2 family.

The protein localises to the cytoplasm. Its subcellular location is the nucleus. Its function is as follows. Bridging factor that mediates the recruitment of cyld to the LUBAC complex, thereby regulating TNF-alpha-induced necroptosis. Required to activate the 'Met-1'- (linear) and 'Lys-63'-linked deubiquitinase activities of cyld. This chain is Spermatogenesis-associated protein 2, found in Danio rerio (Zebrafish).